We begin with the raw amino-acid sequence, 136 residues long: Ergosterol biosynthetic protein 28 (136 aa).

A run of 4 helical transmembrane segments spans residues 18–34, 56–72, 79–95, and 109–125; these read VVVSVAALFNTVQSFLT, FGIWTLLSAIVRFYCAY, VYFLCQCTYYLACFHFL, and GLLSPIVVSTVSIWFMA.

It belongs to the ERG28 family. Heterotetramer of erg25, erg26, erg27 and erg28. Erg28 acts as a scaffold to tether erg27 and other 4,4-demethylation-related enzymes, forming a demethylation enzyme complex, in the endoplasmic reticulum.

It localises to the endoplasmic reticulum membrane. It participates in steroid metabolism; ergosterol biosynthesis. Part of the third module of ergosterol biosynthesis pathway that includes by the late steps of the pathway. Erg28 has a role as a scaffold to help anchor the catalytic components of the C-4 demethylation complex erg25, erg26 and erg27 to the endoplasmic reticulum. The third module or late pathway involves the ergosterol synthesis itself through consecutive reactions that mainly occur in the endoplasmic reticulum (ER) membrane. Firstly, the squalene synthase erg9 catalyzes the condensation of 2 farnesyl pyrophosphate moieties to form squalene, which is the precursor of all steroids. Secondly, squalene is converted into lanosterol by the consecutive action of the squalene epoxidase erg1 and the lanosterol synthase erg7. The lanosterol 14-alpha-demethylase erg11/cyp1 catalyzes C14-demethylation of lanosterol to produce 4,4'-dimethyl cholesta-8,14,24-triene-3-beta-ol. In the next steps, a complex process involving various demethylation, reduction and desaturation reactions catalyzed by the C-14 reductase erg24 and the C-4 demethylation complex erg25-erg26-erg27 leads to the production of zymosterol. Erg28 likely functions in the C-4 demethylation complex reaction by tethering erg26 and Erg27 to the endoplasmic reticulum or to facilitate interaction between these proteins. Then, the sterol 24-C-methyltransferase erg6 catalyzes the methyl transfer from S-adenosyl-methionine to the C-24 of zymosterol to form fecosterol. The C-8 sterol isomerase erg2 catalyzes the reaction which results in unsaturation at C-7 in the B ring of sterols and thus converts fecosterol to episterol. The sterol-C5-desaturases erg31 and erg32 then catalyze the introduction of a C-5 double bond in the B ring to produce 5-dehydroepisterol. The C-22 sterol desaturase erg5 further converts 5-dehydroepisterol into ergosta-5,7,22,24(28)-tetraen-3beta-ol by forming the C-22(23) double bond in the sterol side chain. Finally, ergosta-5,7,22,24(28)-tetraen-3beta-ol is substrate of the C-24(28) sterol reductase erg4 to produce ergosterol. In the genus Schizosaccharomyces, a second route exists between lanosterol and fecosterol, via the methylation of lanosterol to eburicol by erg6, followed by C14-demethylation by erg11/cyp1 and C4-demethylation by the demethylation complex erg25-erg26-erg27. Functionally, extends the chronological lifespan when overexpressed. The polypeptide is Ergosterol biosynthetic protein 28 (Schizosaccharomyces pombe (strain 972 / ATCC 24843) (Fission yeast)).